The sequence spans 282 residues: tRNA (guanine-N(7)-)-methyltransferase (282 aa).

Residues 1-31 (MSLTDDQASKRQAYRAAKEANRKELKHVKID) are disordered. Basic and acidic residues predominate over residues 16–31 (AAKEANRKELKHVKID). Residues G99, 122 to 123 (EI), 157 to 158 (NA), and C177 contribute to the S-adenosyl-L-methionine site. Residue D180 is part of the active site. Residue 255-257 (TEE) coordinates S-adenosyl-L-methionine.

Belongs to the class I-like SAM-binding methyltransferase superfamily. TrmB family. As to quaternary structure, forms a complex with TRM82.

It localises to the nucleus. It carries out the reaction guanosine(46) in tRNA + S-adenosyl-L-methionine = N(7)-methylguanosine(46) in tRNA + S-adenosyl-L-homocysteine. Its pathway is tRNA modification; N(7)-methylguanine-tRNA biosynthesis. In terms of biological role, catalyzes the formation of N(7)-methylguanine at position 46 (m7G46) in tRNA. The protein is tRNA (guanine-N(7)-)-methyltransferase of Eremothecium gossypii (strain ATCC 10895 / CBS 109.51 / FGSC 9923 / NRRL Y-1056) (Yeast).